Consider the following 67-residue polypeptide: DNA-directed RNA polymerase subunit omega (67 aa).

This sequence belongs to the RNA polymerase subunit omega family. The RNAP catalytic core consists of 2 alpha, 1 beta, 1 beta' and 1 omega subunit. When a sigma factor is associated with the core the holoenzyme is formed, which can initiate transcription.

It catalyses the reaction RNA(n) + a ribonucleoside 5'-triphosphate = RNA(n+1) + diphosphate. Its function is as follows. Promotes RNA polymerase assembly. Latches the N- and C-terminal regions of the beta' subunit thereby facilitating its interaction with the beta and alpha subunits. This chain is DNA-directed RNA polymerase subunit omega, found in Burkholderia pseudomallei (strain 1106a).